A 136-amino-acid polypeptide reads, in one-letter code: Large ribosomal subunit protein uL16c (136 aa).

This sequence belongs to the universal ribosomal protein uL16 family. As to quaternary structure, part of the 50S ribosomal subunit.

The protein localises to the plastid. The protein resides in the chloroplast. This is Large ribosomal subunit protein uL16c from Chlamydomonas sp. (strain WXM).